A 440-amino-acid polypeptide reads, in one-letter code: Streptokinase C (440 aa).

A signal peptide spans 1–26; sequence MKNYLSFGMFALLFALTFGTVNSVQA.

Functionally, this protein is not a protease, but it activates plasminogen by complexing with it. As a potential virulence factor, it is thought to prevent the formation of effective fibrin barriers around the site of infection, thereby contributing to the invasiveness of the cells. This chain is Streptokinase C (skc), found in Streptococcus dysgalactiae subsp. equisimilis (Streptococcus equisimilis).